Reading from the N-terminus, the 396-residue chain is Ribosomal RNA large subunit methyltransferase I (396 aa).

The region spanning 2-79 (AVRIKLKPGR…REEEIDREFF (78 aa)) is the PUA domain.

Belongs to the methyltransferase superfamily. RlmI family.

The protein localises to the cytoplasm. The enzyme catalyses cytidine(1962) in 23S rRNA + S-adenosyl-L-methionine = 5-methylcytidine(1962) in 23S rRNA + S-adenosyl-L-homocysteine + H(+). Specifically methylates the cytosine at position 1962 (m5C1962) of 23S rRNA. In Shewanella sp. (strain MR-7), this protein is Ribosomal RNA large subunit methyltransferase I.